The primary structure comprises 247 residues: ATP synthase subunit a, chloroplastic (247 aa).

Transmembrane regions (helical) follow at residues 38–58 (QVLI…TIAV), 95–115 (VPFI…GALL), 134–154 (INTT…AGFT), 199–219 (LVVV…VMFL), and 220–240 (GLFT…AYIG).

The protein belongs to the ATPase A chain family. F-type ATPases have 2 components, CF(1) - the catalytic core - and CF(0) - the membrane proton channel. CF(1) has five subunits: alpha(3), beta(3), gamma(1), delta(1), epsilon(1). CF(0) has four main subunits: a, b, b' and c.

The protein resides in the plastid. Its subcellular location is the chloroplast thylakoid membrane. In terms of biological role, key component of the proton channel; it plays a direct role in the translocation of protons across the membrane. The chain is ATP synthase subunit a, chloroplastic from Liriodendron tulipifera (Tuliptree).